Reading from the N-terminus, the 152-residue chain is UPF0266 membrane protein YobD (152 aa).

3 helical membrane passes run 6-26, 45-65, and 67-87; these read LVLI…QFIM, IDSV…VTNH, and AQIT…IFWI.

This sequence belongs to the UPF0266 family.

It localises to the cell inner membrane. In Escherichia fergusonii (strain ATCC 35469 / DSM 13698 / CCUG 18766 / IAM 14443 / JCM 21226 / LMG 7866 / NBRC 102419 / NCTC 12128 / CDC 0568-73), this protein is UPF0266 membrane protein YobD.